A 447-amino-acid polypeptide reads, in one-letter code: Na(+)-translocating NADH-quinone reductase subunit A (447 aa).

This sequence belongs to the NqrA family. As to quaternary structure, composed of six subunits; NqrA, NqrB, NqrC, NqrD, NqrE and NqrF.

The catalysed reaction is a ubiquinone + n Na(+)(in) + NADH + H(+) = a ubiquinol + n Na(+)(out) + NAD(+). In terms of biological role, NQR complex catalyzes the reduction of ubiquinone-1 to ubiquinol by two successive reactions, coupled with the transport of Na(+) ions from the cytoplasm to the periplasm. NqrA to NqrE are probably involved in the second step, the conversion of ubisemiquinone to ubiquinol. The protein is Na(+)-translocating NADH-quinone reductase subunit A of Haemophilus influenzae (strain ATCC 51907 / DSM 11121 / KW20 / Rd).